We begin with the raw amino-acid sequence, 372 residues long: Sesquiterpene synthase Agr9 (372 aa).

Residues Asp87, Asn225, Ser229, and Glu233 each contribute to the Mg(2+) site. Residues 87–91 (DEYTD) carry the DDXXD motif motif. Positions 314 and 315 each coordinate (2E,6E)-farnesyl diphosphate.

This sequence belongs to the terpene synthase family. Mg(2+) is required as a cofactor.

It catalyses the reaction (2E,6E)-farnesyl diphosphate = gamma-muurolene + diphosphate. It carries out the reaction (2E,6E)-farnesyl diphosphate = delta-cadinene + diphosphate. Terpene cyclase that catalyzes the cyclization of farnesyl diphosphate (FPP) to various sesquiterpenes, including gamma-muurolene, beta-cadinene and delta-cadinene. This chain is Sesquiterpene synthase Agr9, found in Cyclocybe aegerita (Black poplar mushroom).